The chain runs to 498 residues: L-amino acid oxidase Bs29 (498 aa).

Residues 1–3 (SCA) form the signal peptide. A disulfide bond links Cys-12 and Cys-175. Residues 45-46 (MS), 65-66 (EA), Arg-73, and 89-92 (GPMR) each bind FAD. Arg-92 serves as a coordination point for substrate. Asn-174 carries N-linked (GlcNAc...) asparagine glycosylation. His-225 is a substrate binding site. An FAD-binding site is contributed by Val-263. Residues Cys-333 and Cys-414 are joined by a disulfide bond. A substrate-binding site is contributed by Tyr-374. FAD is bound by residues Glu-459 and 466-471 (GWIDST). 466 to 467 (GW) serves as a coordination point for substrate.

Belongs to the flavin monoamine oxidase family. FIG1 subfamily. In terms of assembly, monomer. This is in contrast with most of its orthologs, that are non-covalently linked homodimers. FAD serves as cofactor. As to expression, expressed by the venom gland.

It is found in the secreted. The enzyme catalyses an L-alpha-amino acid + O2 + H2O = a 2-oxocarboxylate + H2O2 + NH4(+). The catalysed reaction is L-leucine + O2 + H2O = 4-methyl-2-oxopentanoate + H2O2 + NH4(+). In terms of biological role, catalyzes an oxidative deamination of predominantly hydrophobic and aromatic L-amino acids, thus producing hydrogen peroxide that may contribute to the diverse toxic effects of this enzyme. Shows activity on L-Leu. Damage cell membranes of the Gram-positive bacteria S.aureus (MIC=4 ug/ml and MBC=8 ug/ml) and the Gram-negative bacteria A.baumanni (MIC=2 ug/ml and MBC=4 ug/ml). This antibacterial activity is dependent on the production of hydrogen peroxyde, since it is inhibited by catalase, a hydrogen peroxyde scavenger. This is L-amino acid oxidase Bs29 from Bothriechis schlegelii (Eyelash palm pitviper).